We begin with the raw amino-acid sequence, 235 residues long: Large ribosomal subunit protein uL1 (235 aa).

Belongs to the universal ribosomal protein uL1 family. In terms of assembly, part of the 50S ribosomal subunit.

In terms of biological role, binds directly to 23S rRNA. The L1 stalk is quite mobile in the ribosome, and is involved in E site tRNA release. Its function is as follows. Protein L1 is also a translational repressor protein, it controls the translation of the L11 operon by binding to its mRNA. This Micrococcus luteus (strain ATCC 4698 / DSM 20030 / JCM 1464 / CCM 169 / CCUG 5858 / IAM 1056 / NBRC 3333 / NCIMB 9278 / NCTC 2665 / VKM Ac-2230) (Micrococcus lysodeikticus) protein is Large ribosomal subunit protein uL1.